We begin with the raw amino-acid sequence, 504 residues long: Probable cytochrome P450 6a21 (504 aa).

Residue C449 coordinates heme.

Belongs to the cytochrome P450 family. Requires heme as cofactor.

Its subcellular location is the endoplasmic reticulum membrane. It is found in the microsome membrane. Its function is as follows. May be involved in the metabolism of insect hormones and in the breakdown of synthetic insecticides. The protein is Probable cytochrome P450 6a21 (Cyp6a21) of Drosophila melanogaster (Fruit fly).